Here is a 271-residue protein sequence, read N- to C-terminus: Phosphate import ATP-binding protein PstB 1 (271 aa).

The ABC transporter domain occupies 24–266; sequence MIGKDVSVYY…PDDPRTQDYI (243 aa). Residue 56–63 participates in ATP binding; it reads GPSGCGKS.

Belongs to the ABC transporter superfamily. Phosphate importer (TC 3.A.1.7) family. In terms of assembly, the complex is composed of two ATP-binding proteins (PstB), two transmembrane proteins (PstC and PstA) and a solute-binding protein (PstS).

The protein localises to the cell inner membrane. It carries out the reaction phosphate(out) + ATP + H2O = ADP + 2 phosphate(in) + H(+). Part of the ABC transporter complex PstSACB involved in phosphate import. Responsible for energy coupling to the transport system. The sequence is that of Phosphate import ATP-binding protein PstB 1 from Rhizobium johnstonii (strain DSM 114642 / LMG 32736 / 3841) (Rhizobium leguminosarum bv. viciae).